Reading from the N-terminus, the 167-residue chain is Multifunctional Ser/Thr-tRNA deacylase ProXp-y (167 aa).

It is found in the cytoplasm. The enzyme catalyses L-seryl-tRNA(Lys) + H2O = tRNA(Lys) + L-serine. It carries out the reaction L-threonyl-tRNA(Lys) + H2O = tRNA(Lys) + L-threonine. The catalysed reaction is L-homoseryl-tRNA(Lys) + H2O = tRNA(Lys) + L-homoserine + H(+). It catalyses the reaction L-seryl-tRNA(Ala) + H2O = tRNA(Ala) + L-serine. The enzyme catalyses L-homoseryl-tRNA(Ser) + H2O = tRNA(Ser) + L-homoserine + H(+). It carries out the reaction L-seryl-tRNA(Thr) + H2O = tRNA(Thr) + L-serine. The catalysed reaction is L-threonyl-tRNA(Ile) + H2O = tRNA(Ile) + L-threonine. It catalyses the reaction L-threonyl-tRNA(Val) + H2O = tRNA(Val) + L-threonine. The enzyme catalyses L-threonyl-tRNA(Ser) + H2O = tRNA(Ser) + L-threonine. Its function is as follows. An aminoacyl-tRNA editing enzyme that deacylates Ser-tRNA and/or Thr-tRNA mischarged by lysyl-tRNA synthetase (LysRS), threonyl-tRNA synthetase (ThrRS), seryl-tRNA synthetase (SerRS), alanyl-tRNA synthetase (AlaRS), valyl-tRNA synthetase (ValRS) and isoleucyl-tRNA synthetase (IleRS) in vitro. Also deacylates mischarged Hse-tRNA(Lys) and Hse-tRNA(Ser), and cognate Ser-tRNA(Ser) and Thr-tRNA(Thr) in vitro. The presence of cognate ThrRS abolishes the Thr-tRNA(Thr) deacylase activity, hence this activity is not applicable physiologically. Not able to remove the amino acid moiety from cognate Val-tRNA(Val), Ile-tRNA(Ile), Lys-tRNA(Lys), Ala-tRNA(Ala) or Pro-tRNA(Pro), or from incorrectly charged Ala-tRNA(Pro), Cys-tRNA(Pro) or Leu-tRNA(Pro) in vitro. May be required in vivo to prevent mistranslation and to maintain growth when the error prone stress-inducible lysyl-tRNA synthetase (LysU) is expressed under environmental pressure. This chain is Multifunctional Ser/Thr-tRNA deacylase ProXp-y, found in Escherichia coli O157:H7.